The following is a 1225-amino-acid chain: DNA-directed RNA polymerase subunit beta' (1225 aa).

The Zn(2+) site is built by Cys60, Cys62, Cys75, and Cys78. The Mg(2+) site is built by Asp450, Asp452, and Asp454. Zn(2+) is bound by residues Cys818, Cys892, Cys899, and Cys902.

The protein belongs to the RNA polymerase beta' chain family. As to quaternary structure, the RNAP catalytic core consists of 2 alpha, 1 beta, 1 beta' and 1 omega subunit. When a sigma factor is associated with the core the holoenzyme is formed, which can initiate transcription. Mg(2+) serves as cofactor. Zn(2+) is required as a cofactor.

It catalyses the reaction RNA(n) + a ribonucleoside 5'-triphosphate = RNA(n+1) + diphosphate. DNA-dependent RNA polymerase catalyzes the transcription of DNA into RNA using the four ribonucleoside triphosphates as substrates. This chain is DNA-directed RNA polymerase subunit beta', found in Streptococcus pneumoniae serotype 19F (strain G54).